We begin with the raw amino-acid sequence, 432 residues long: Tol-Pal system protein TolB (432 aa).

Residues 1–21 (MSTLIRIALFALALMAGAAQA) form the signal peptide.

Belongs to the TolB family. As to quaternary structure, the Tol-Pal system is composed of five core proteins: the inner membrane proteins TolA, TolQ and TolR, the periplasmic protein TolB and the outer membrane protein Pal. They form a network linking the inner and outer membranes and the peptidoglycan layer.

The protein resides in the periplasm. In terms of biological role, part of the Tol-Pal system, which plays a role in outer membrane invagination during cell division and is important for maintaining outer membrane integrity. The protein is Tol-Pal system protein TolB of Pseudomonas aeruginosa (strain ATCC 15692 / DSM 22644 / CIP 104116 / JCM 14847 / LMG 12228 / 1C / PRS 101 / PAO1).